The sequence spans 431 residues: Enolase (431 aa).

Gln163 serves as a coordination point for (2R)-2-phosphoglycerate. Glu205 acts as the Proton donor in catalysis. Asp242, Glu288, and Asp315 together coordinate Mg(2+). (2R)-2-phosphoglycerate contacts are provided by Lys340, Arg369, Ser370, and Lys391. Lys340 serves as the catalytic Proton acceptor.

This sequence belongs to the enolase family. It depends on Mg(2+) as a cofactor.

The protein resides in the cytoplasm. Its subcellular location is the secreted. The protein localises to the cell surface. The catalysed reaction is (2R)-2-phosphoglycerate = phosphoenolpyruvate + H2O. It participates in carbohydrate degradation; glycolysis; pyruvate from D-glyceraldehyde 3-phosphate: step 4/5. Functionally, catalyzes the reversible conversion of 2-phosphoglycerate (2-PG) into phosphoenolpyruvate (PEP). It is essential for the degradation of carbohydrates via glycolysis. This is Enolase from Bacillus cereus (strain AH187).